A 615-amino-acid chain; its full sequence is Protein translocase subunit SecD (615 aa).

6 consecutive transmembrane segments (helical) span residues 10 to 30, 452 to 472, 477 to 497, 504 to 524, 546 to 568, and 585 to 605; these read YIML…NLYG, QGLE…IFFY, LIAT…MSLL, MPGI…NVLI, YAGA…IILY, and GVAT…NLLY.

Belongs to the SecD/SecF family. SecD subfamily. As to quaternary structure, forms a complex with SecF. Part of the essential Sec protein translocation apparatus which comprises SecA, SecYEG and auxiliary proteins SecDF-YajC and YidC.

It localises to the cell inner membrane. In terms of biological role, part of the Sec protein translocase complex. Interacts with the SecYEG preprotein conducting channel. SecDF uses the proton motive force (PMF) to complete protein translocation after the ATP-dependent function of SecA. The chain is Protein translocase subunit SecD from Salmonella choleraesuis (strain SC-B67).